The following is a 302-amino-acid chain: 4-hydroxy-tetrahydrodipicolinate synthase (302 aa).

A pyruvate-binding site is contributed by Thr-55. Tyr-144 acts as the Proton donor/acceptor in catalysis. Lys-172 (schiff-base intermediate with substrate) is an active-site residue. Pyruvate is bound at residue Val-214.

This sequence belongs to the DapA family. Homotetramer; dimer of dimers.

The protein resides in the cytoplasm. It catalyses the reaction L-aspartate 4-semialdehyde + pyruvate = (2S,4S)-4-hydroxy-2,3,4,5-tetrahydrodipicolinate + H2O + H(+). The protein operates within amino-acid biosynthesis; L-lysine biosynthesis via DAP pathway; (S)-tetrahydrodipicolinate from L-aspartate: step 3/4. Catalyzes the condensation of (S)-aspartate-beta-semialdehyde [(S)-ASA] and pyruvate to 4-hydroxy-tetrahydrodipicolinate (HTPA). This chain is 4-hydroxy-tetrahydrodipicolinate synthase, found in Prochlorococcus marinus (strain MIT 9303).